We begin with the raw amino-acid sequence, 555 residues long: High-affinity gluconate transporter ght3 (555 aa).

The Cytoplasmic portion of the chain corresponds to M1–L9. The helical transmembrane segment at V10–I30 threads the bilayer. Residues L31–Q58 are Extracellular-facing. Residues A59–F79 form a helical membrane-spanning segment. Residues T80 to Y87 lie on the Cytoplasmic side of the membrane. The chain crosses the membrane as a helical span at residues S88–P108. Residues S109–Q112 are Extracellular-facing. The chain crosses the membrane as a helical span at residues V113–G133. The Cytoplasmic portion of the chain corresponds to Y134–R144. Residues G145 to I165 form a helical membrane-spanning segment. Residues N166–R179 are Extracellular-facing. Residues T180–P200 form a helical membrane-spanning segment. Over E201–T266 the chain is Cytoplasmic. Residues C267 to F285 traverse the membrane as a helical segment. The Extracellular portion of the chain corresponds to Y286 to F301. Residues L302–I322 form a helical membrane-spanning segment. The Cytoplasmic portion of the chain corresponds to D323 to R328. Residues N329–G349 traverse the membrane as a helical segment. Residues D350–R363 are Extracellular-facing. An N-linked (GlcNAc...) asparagine glycan is attached at N357. The helical transmembrane segment at A364–G384 threads the bilayer. Residues P385–A404 lie on the Cytoplasmic side of the membrane. Residues S405 to I425 form a helical membrane-spanning segment. Residues N426–K432 lie on the Extracellular side of the membrane. Residues L433–K453 form a helical membrane-spanning segment. The Cytoplasmic portion of the chain corresponds to E454 to I555. A compositionally biased stretch (basic and acidic residues) spans K492–E509. Residues K492–I555 form a disordered region. The segment covering E510–N521 has biased composition (acidic residues). Positions D522–V534 are enriched in low complexity. A compositionally biased stretch (basic and acidic residues) spans R545–I555.

Belongs to the major facilitator superfamily. Sugar transporter (TC 2.A.1.1) family.

It is found in the membrane. In terms of biological role, high-affinity gluconate transporter. In Schizosaccharomyces pombe (strain 972 / ATCC 24843) (Fission yeast), this protein is High-affinity gluconate transporter ght3 (ght3).